The primary structure comprises 571 residues: Proline--tRNA ligase (571 aa).

The protein belongs to the class-II aminoacyl-tRNA synthetase family. ProS type 1 subfamily. As to quaternary structure, homodimer.

The protein resides in the cytoplasm. It carries out the reaction tRNA(Pro) + L-proline + ATP = L-prolyl-tRNA(Pro) + AMP + diphosphate. Catalyzes the attachment of proline to tRNA(Pro) in a two-step reaction: proline is first activated by ATP to form Pro-AMP and then transferred to the acceptor end of tRNA(Pro). As ProRS can inadvertently accommodate and process non-cognate amino acids such as alanine and cysteine, to avoid such errors it has two additional distinct editing activities against alanine. One activity is designated as 'pretransfer' editing and involves the tRNA(Pro)-independent hydrolysis of activated Ala-AMP. The other activity is designated 'posttransfer' editing and involves deacylation of mischarged Ala-tRNA(Pro). The misacylated Cys-tRNA(Pro) is not edited by ProRS. This Shewanella frigidimarina (strain NCIMB 400) protein is Proline--tRNA ligase.